A 943-amino-acid polypeptide reads, in one-letter code: Isoleucine--tRNA ligase (943 aa).

The short motif at 58-68 (PYANGSIHIGH) is the 'HIGH' region element. Position 567 (Glu567) interacts with L-isoleucyl-5'-AMP. Residues 608-612 (KMSKS) carry the 'KMSKS' region motif. Position 611 (Lys611) interacts with ATP. Zn(2+) contacts are provided by Cys906, Cys909, Cys926, and Cys929.

The protein belongs to the class-I aminoacyl-tRNA synthetase family. IleS type 1 subfamily. Monomer. Requires Zn(2+) as cofactor.

Its subcellular location is the cytoplasm. It carries out the reaction tRNA(Ile) + L-isoleucine + ATP = L-isoleucyl-tRNA(Ile) + AMP + diphosphate. Its function is as follows. Catalyzes the attachment of isoleucine to tRNA(Ile). As IleRS can inadvertently accommodate and process structurally similar amino acids such as valine, to avoid such errors it has two additional distinct tRNA(Ile)-dependent editing activities. One activity is designated as 'pretransfer' editing and involves the hydrolysis of activated Val-AMP. The other activity is designated 'posttransfer' editing and involves deacylation of mischarged Val-tRNA(Ile). In Pseudomonas paraeruginosa (strain DSM 24068 / PA7) (Pseudomonas aeruginosa (strain PA7)), this protein is Isoleucine--tRNA ligase.